The primary structure comprises 321 residues: Glutamyl-Q tRNA(Asp) synthetase (321 aa).

Residues 25–29 (RFAPS) and E61 each bind L-glutamate. The short motif at 28 to 38 (PSPSGDLHFGS) is the 'HIGH' region element. Zn(2+)-binding residues include C117, C119, Y131, and C135. Y188 and R206 together coordinate L-glutamate. Positions 244-248 (KLSKQ) match the 'KMSKS' region motif. K247 provides a ligand contact to ATP.

The protein belongs to the class-I aminoacyl-tRNA synthetase family. GluQ subfamily. The cofactor is Zn(2+).

Functionally, catalyzes the tRNA-independent activation of glutamate in presence of ATP and the subsequent transfer of glutamate onto a tRNA(Asp). Glutamate is transferred on the 2-amino-5-(4,5-dihydroxy-2-cyclopenten-1-yl) moiety of the queuosine in the wobble position of the QUC anticodon. In Yersinia pestis, this protein is Glutamyl-Q tRNA(Asp) synthetase.